The chain runs to 134 residues: Fluoride-specific ion channel FluC (134 aa).

The next 4 membrane-spanning stretches (helical) occupy residues 7-27 (LAVA…TIMA), 38-58 (GTLL…IVLV), 69-89 (LFLF…AAES), and 110-130 (VGSL…LLGH). Na(+) is bound by residues Gly77 and Thr80.

It belongs to the fluoride channel Fluc/FEX (TC 1.A.43) family.

Its subcellular location is the cell inner membrane. The enzyme catalyses fluoride(in) = fluoride(out). With respect to regulation, na(+) is not transported, but it plays an essential structural role and its presence is essential for fluoride channel function. Its function is as follows. Fluoride-specific ion channel. Important for reducing fluoride concentration in the cell, thus reducing its toxicity. This chain is Fluoride-specific ion channel FluC, found in Legionella pneumophila (strain Lens).